The chain runs to 225 residues: Ribose-5-phosphate isomerase A (225 aa).

Substrate is bound by residues 32-35, 85-88, and 98-101; these read TGST, DGAD, and KGGG. Glutamate 107 functions as the Proton acceptor in the catalytic mechanism. Lysine 125 contacts substrate.

It belongs to the ribose 5-phosphate isomerase family. Homodimer.

It carries out the reaction aldehydo-D-ribose 5-phosphate = D-ribulose 5-phosphate. The protein operates within carbohydrate degradation; pentose phosphate pathway; D-ribose 5-phosphate from D-ribulose 5-phosphate (non-oxidative stage): step 1/1. In terms of biological role, catalyzes the reversible conversion of ribose-5-phosphate to ribulose 5-phosphate. This Hahella chejuensis (strain KCTC 2396) protein is Ribose-5-phosphate isomerase A.